The chain runs to 457 residues: uncharacterized protein (457 aa).

The first 18 residues, 1–18, serve as a signal peptide directing secretion; that stretch reads MKLLISLLWSIFFSIVYS. Topologically, residues 19–173 are lumenal; it reads EKTLLNFKHY…GGLPASQFPR (155 aa). A helical transmembrane segment spans residues 174–194; sequence MPISGGITIAYSVILALWMFF. The Cytoplasmic segment spans residues 195 to 207; it reads RFQYKHSIVTVQK. The helical transmembrane segment at 208-228 threads the bilayer; it reads AIMFLLIFSCAQQAVTSIVLD. Residues 229–243 are Lumenal-facing; sequence TENLRNRGNFTWLGE. The chain crosses the membrane as a helical span at residues 244–264; that stretch reads TLVSILFACQLVLDLALLLIL. Over 265–284 the chain is Cytoplasmic; it reads SWGYTRYSTNMRDRLFTEAK. A helical membrane pass occupies residues 285–305; sequence IPLIICFFALFVVRFFAITIQ. Over 306–314 the chain is Lumenal; the sequence is SIHLGLWFC. A helical membrane pass occupies residues 315–335; that stretch reads FFFLTACISALYILFGAFVAL. Residues 336 to 358 are Cytoplasmic-facing; the sequence is PSTLRALVEQRYYTLHSIYKIFR. A helical membrane pass occupies residues 359-379; the sequence is IMVLCGVVTIFSFSLVALIFC. Topologically, residues 380-457 are lumenal; the sequence is SNTNNNSTNK…EEDIRADKSK (78 aa).

It belongs to the LU7TM family.

It is found in the endoplasmic reticulum membrane. This is an uncharacterized protein from Schizosaccharomyces pombe (strain 972 / ATCC 24843) (Fission yeast).